Consider the following 327-residue polypeptide: 2-methoxy-6-polyprenyl-1,4-benzoquinol methylase, mitochondrial (327 aa).

A mitochondrion-targeting transit peptide spans 1-49 (MAAPRSCVLWSYCGHGWSRLAGDCRLPGFRRSWLGATLSARSLSQEKRA). S-adenosyl-L-methionine is bound by residues T117, D171, and 199 to 200 (DA).

The protein belongs to the class I-like SAM-binding methyltransferase superfamily. MenG/UbiE family. In terms of assembly, component of a multi-subunit COQ enzyme complex, composed of at least COQ3, COQ4, COQ5, COQ6, COQ7 and COQ9. Interacts with PYURF; the interaction is direct, stabilizes COQ5 protein and associates PYURF with COQ enzyme complex.

The protein localises to the mitochondrion inner membrane. The enzyme catalyses 2-methoxy-6-(all-trans-decaprenyl)benzene-1,4-diol + S-adenosyl-L-methionine = 5-methoxy-2-methyl-3-(all-trans-decaprenyl)benzene-1,4-diol + S-adenosyl-L-homocysteine + H(+). The protein operates within cofactor biosynthesis; ubiquinone biosynthesis. In terms of biological role, methyltransferase required for the conversion of 2-decaprenyl-6-methoxy-1,4-benzoquinol (DDMQH2) to 2-decaprenyl-3-methyl-6-methoxy-1,4-benzoquinol (DMQH2). The chain is 2-methoxy-6-polyprenyl-1,4-benzoquinol methylase, mitochondrial from Rattus norvegicus (Rat).